Reading from the N-terminus, the 207-residue chain is Outer-membrane lipoprotein LolB (207 aa).

The signal sequence occupies residues 1 to 21; sequence MPLPDFRLIRLLPLAALVLTA. A lipid anchor (N-palmitoyl cysteine) is attached at Cys22. A lipid anchor (S-diacylglycerol cysteine) is attached at Cys22.

Belongs to the LolB family. Monomer.

The protein localises to the cell outer membrane. Functionally, plays a critical role in the incorporation of lipoproteins in the outer membrane after they are released by the LolA protein. This Shigella boydii serotype 18 (strain CDC 3083-94 / BS512) protein is Outer-membrane lipoprotein LolB.